The following is a 645-amino-acid chain: Zinc finger protein 235 (645 aa).

One can recognise a KRAB domain in the interval 8 to 86 (VTFRDVAVVF…TSHDVNKLAR (79 aa)). Disordered regions lie at residues 112-144 (GAEQPSQAPEDDGCLENLPSNHSSSSDNQEFLS) and 255-280 (KKSPVHSTHKDTRHSPSVPIQPSVHP). Positions 129 to 144 (LPSNHSSSSDNQEFLS) are enriched in polar residues. 13 consecutive C2H2-type zinc fingers follow at residues 285–307 (YWCHECGKGFRQSSALQTHQRVH), 313–335 (YRCDSCGKGFSRSSDLNIHRRVH), 341–363 (YKCEVCGKGFTQWAHLQAHERIH), 369–391 (YKCGDCGKRFSCSSNLHTHQRVH), 397–419 (YECNECGKRFSLSGNLDIHQRVH), 425–447 (YKCEECGKGFSSASSFQSHQRVH), 453–475 (FHCSVCGKNFSRSSHFLDHQRIH), 481–503 (YRCEVCGKRFPWSLSLHSHQSVH), 509–531 (YKCGECGKGFSHASSLQAHHSVH), 537–559 (FKCNVCQKQFSKTSNLQAHQRVH), 565–587 (YKCDTCGKAFSQKSSLQVHQRIH), 593–615 (FKCEECGKEFRWSVGLSSHQRVH), and 621–643 (YTCQQCGKGFSQASYFHMHQRVH).

It belongs to the krueppel C2H2-type zinc-finger protein family.

It localises to the nucleus. Functionally, may be involved in transcriptional regulation. The chain is Zinc finger protein 235 (Znf235) from Mus musculus (Mouse).